Reading from the N-terminus, the 486-residue chain is Ribosomal RNA small subunit methyltransferase F (486 aa).

S-adenosyl-L-methionine-binding positions include A122–K128, E146, D173, and D191. Catalysis depends on C244, which acts as the Nucleophile.

It belongs to the class I-like SAM-binding methyltransferase superfamily. RsmB/NOP family.

The protein localises to the cytoplasm. It catalyses the reaction cytidine(1407) in 16S rRNA + S-adenosyl-L-methionine = 5-methylcytidine(1407) in 16S rRNA + S-adenosyl-L-homocysteine + H(+). Its function is as follows. Specifically methylates the cytosine at position 1407 (m5C1407) of 16S rRNA. This Shewanella loihica (strain ATCC BAA-1088 / PV-4) protein is Ribosomal RNA small subunit methyltransferase F.